The sequence spans 130 residues: HTH-type transcriptional regulator KmtR (130 aa).

Residues 10–104 (LPDDQVCLVV…DAVFNAEHAG (95 aa)) enclose the HTH arsR-type domain. Positions 44–67 (VNELAEQVGKPAPSVSQHLAKLRM) form a DNA-binding region, H-T-H motif. The interval 110 to 130 (HHRAAGGLQSVAKASATKDVG) is disordered.

With respect to regulation, binding to DNA is inhibited by nickel and cobalt ions. Its function is as follows. Represses expression of Rv2025c and its own expression. Acts by binding to the promoter regions. The polypeptide is HTH-type transcriptional regulator KmtR (kmtR) (Mycobacterium tuberculosis (strain ATCC 25618 / H37Rv)).